We begin with the raw amino-acid sequence, 60 residues long: MNNAKIWTVVKPSTGIPLILGAVAVAALIVHAGLLTNTTWFANYWNGNPMATVVAVAPAQ.

At Met1 to Thr14 the chain is on the cytoplasmic side. A helical transmembrane segment spans residues Gly15–Leu35. His31 is a binding site for a bacteriochlorophyll. The Periplasmic segment spans residues Thr36–Gln60.

It belongs to the antenna complex alpha subunit family. In terms of assembly, the core complex is formed by different alpha and beta chains, binding bacteriochlorophyll molecules, and arranged most probably in tetrameric structures disposed around the reaction center. The non-pigmented gamma chains may constitute additional components.

It localises to the cell inner membrane. In terms of biological role, antenna complexes are light-harvesting systems, which transfer the excitation energy to the reaction centers. This is Light-harvesting protein B-800/850 alpha chain (pucA) from Rhodobacter capsulatus (Rhodopseudomonas capsulata).